The sequence spans 550 residues: ATP-dependent RNA helicase MSS116, mitochondrial (550 aa).

Over residues 1–11 (MPPPPKRKWPN) the composition is skewed to basic residues. Residues 1–41 (MPPPPKRKWPNRPRGGGGANGSASGTPTTPRSTVAQQPKRP) constitute a mitochondrion transit peptide. The disordered stretch occupies residues 1–51 (MPPPPKRKWPNRPRGGGGANGSASGTPTTPRSTVAQQPKRPKVEDAAPAAE). The short motif at 71 to 99 (FSELSSVLDKSLLDGLDKMGFEFMSPVQQ) is the Q motif element. In terms of domain architecture, Helicase ATP-binding spans 103 to 285 (TELPSLSSDC…KIVLFPGFTH (183 aa)). 116-123 (AKTGTGKT) contacts ATP. Residues 230 to 233 (DEAD) carry the DEAD box motif. The Helicase C-terminal domain occupies 316–472 (ALSALIQEEH…KVPEQEAAIT (157 aa)).

It belongs to the DEAD box helicase family. DDX18/HAS1 subfamily.

Its subcellular location is the mitochondrion matrix. The enzyme catalyses ATP + H2O = ADP + phosphate + H(+). ATP-dependent RNA helicase required for mitochondrial splicing of group I and II introns. Also required for efficient mitochondrial translation. The sequence is that of ATP-dependent RNA helicase MSS116, mitochondrial (MSS116) from Phaeosphaeria nodorum (strain SN15 / ATCC MYA-4574 / FGSC 10173) (Glume blotch fungus).